A 622-amino-acid chain; its full sequence is 1-deoxy-D-xylulose-5-phosphate synthase (622 aa).

Residues His-80 and Gly-121–Ser-123 each bind thiamine diphosphate. Asp-152 serves as a coordination point for Mg(2+). Thiamine diphosphate-binding positions include Gly-153–Ala-154, Asn-181, Tyr-288, and Glu-370. Asn-181 contributes to the Mg(2+) binding site.

This sequence belongs to the transketolase family. DXPS subfamily. In terms of assembly, homodimer. The cofactor is Mg(2+). Thiamine diphosphate serves as cofactor.

It catalyses the reaction D-glyceraldehyde 3-phosphate + pyruvate + H(+) = 1-deoxy-D-xylulose 5-phosphate + CO2. The protein operates within metabolic intermediate biosynthesis; 1-deoxy-D-xylulose 5-phosphate biosynthesis; 1-deoxy-D-xylulose 5-phosphate from D-glyceraldehyde 3-phosphate and pyruvate: step 1/1. Its function is as follows. Catalyzes the acyloin condensation reaction between C atoms 2 and 3 of pyruvate and glyceraldehyde 3-phosphate to yield 1-deoxy-D-xylulose-5-phosphate (DXP). The sequence is that of 1-deoxy-D-xylulose-5-phosphate synthase from Shewanella baltica (strain OS195).